A 193-amino-acid polypeptide reads, in one-letter code: Resuscitation-promoting factor Rpf1 (193 aa).

The first 35 residues, 1–35, serve as a signal peptide directing secretion; that stretch reads MGRHSTKTSSAFTKLAASTIAFGAAATIMAPSASA.

Belongs to the transglycosylase family. Rpf subfamily.

Its subcellular location is the secreted. Factor that stimulates resuscitation of dormant cells. Has peptidoglycan (PG) hydrolytic activity. Active in the pM concentration range. Has little to no effect on actively-growing cells. PG fragments could either directly activate the resuscitation pathway of dormant bacteria or serve as a substrate for endogenous Rpf, resulting in low molecular weight products with resuscitation activity. The protein is Resuscitation-promoting factor Rpf1 (rpf1) of Corynebacterium glutamicum (strain ATCC 13032 / DSM 20300 / JCM 1318 / BCRC 11384 / CCUG 27702 / LMG 3730 / NBRC 12168 / NCIMB 10025 / NRRL B-2784 / 534).